A 2531-amino-acid chain; its full sequence is Highly reducing polyketide synthase gloL (2531 aa).

A Ketosynthase family 3 (KS3) domain is found at 15-435; that stretch reads YEPLAIVGMG…GANAHVILDS (421 aa). Active-site for beta-ketoacyl synthase activity residues include cysteine 187, histidine 322, and histidine 358. Residues 449 to 525 are disordered; it reads TNGLSVNGHS…GHSVNGHSKP (77 aa). Over residues 453-503 the composition is skewed to low complexity; that stretch reads SVNGHSINGNSVNGHSVNGHSTNGHSINGNSVNGHSVNGNSVNGHSTNGHS. Residues 505–521 show a composition bias toward polar residues; the sequence is NGHSANGNSINGHSVNG. Residues 602-909 are malonyl-CoA:ACP transacylase (MAT) domain; the sequence is MVFTGQGAQW…VTALERGKDC (308 aa). The interval 971 to 1099 is N-terminal hotdog fold; sequence HEILGSRTVE…GQIRSGTDNP (129 aa). Residues 971–1251 are dehydratase (DH) domain; that stretch reads HEILGSRTVE…GGQFSPIEED (281 aa). Positions 971–1254 constitute a PKS/mFAS DH domain; it reads HEILGSRTVE…FSPIEEDSSD (284 aa). Catalysis depends on histidine 1003, which acts as the Proton acceptor; for dehydratase activity. The interval 1109–1254 is C-terminal hotdog fold; the sequence is DHPRSVPSPY…FSPIEEDSSD (146 aa). The active-site Proton donor; for dehydratase activity is the aspartate 1169. The tract at residues 1419–1597 is methyltransferase (CMet) domain; sequence DFFTAAGHSK…FSGCDATVYD (179 aa). The enoyl reductase (ER) (ER) domain stretch occupies residues 1806–2114; sequence GLLQTLRWVP…KGSHIGKIVV (309 aa). Residues 2139–2312 are ketoreductase (KR) domain; it reads GYLLVGGLGG…ASVVDIGVMG (174 aa). The Carrier domain occupies 2413-2505; it reads MSSVETDSSI…ALGLLTIEGL (93 aa). Residue serine 2464 is modified to O-(pantetheine 4'-phosphoryl)serine.

The protein operates within mycotoxin biosynthesis. In terms of biological role, highly reducing polyketide synthase; part of the gene cluster that mediates the biosynthesis of pneumocandins, lipohexapeptides of the echinocandin family that prevent fungal cell wall formation by non-competitive inhibition of beta-1,3-glucan synthase. The 10,12-dimethylmyristoyl side chain is synthesized by the reducing polyketide synthase gloL/GLPKS4. The thioesterase gloN/GLHYD exclusively interacts with gloL/GLPKS4 to maintain turnover of the polyketide side chain. The 10R,12S-dimethylmyristic acid is then transferred to the first thiolation domain of the nonribosomal peptide synthetase gloA/GLNRPS4 by the acyl-AMP ligase gloD/GLligase, followed by its acylation to L-ornithine to trigger elongation of the cyclic hexapeptide. L-ornithine, 4R-hydroxyl-L-proline (generated from L-proline by the dioxygenase gloF/GLOXY2), 3S-hydroxyl-L-homotyrosine (generated by gloG/GLHtyB, gloH/GLHtyA, gloI/GLHtyC, gloJ/GLHtyD and hydroxylated at C-3 by the dioxygenase gloM/GLOXY1), 3R-hydroxyl-L-glutamine (generated from L-glutamine probably by the dioxygenase gloE/GLOXY3) and 3S-hydroxyl-L-proline (generated from L-proline by the dioxygenase gloF/GLOXY2 to yield pneumocandin B0), or 3S-hydroxyl-4S-methyl-L-proline (generated from L-leucine by the dioxygenase gloC/GLOXY4 to yield pneumocandin A0) are sequentially added to the growing chain. The last C domain of gloA/GLNRPS4 is proposed to be responsible for cyclization by condensation to form the peptide bond between L-ornithine and 3S-hydroxyl-4S-methyl-L-proline (for pneumocandin A0) or 3S-hydroxyl-L-proline (for pneumocandin B0). Finally, the subsequent C-4 hydroxylation of 3S-hydroxyl-L-homotyrosine and L-ornithine dihydroxylation at C-4 and C-5 are performed by the cytochrome P450 monooxygenases gloP/GLP450-1 and gloO/GLP450-2, respectively. In Glarea lozoyensis (strain ATCC 20868 / MF5171), this protein is Highly reducing polyketide synthase gloL.